The following is a 472-amino-acid chain: MRSSVLSLHPDRLLPADPGTRAIARRLYAQVATLPIISPHGHTDPAWFATNAPFANATELLLVPDHYVFRMLYSQGIDLDALGIPRADGTRAAVDPRAAWRVFAEHYTLLRGTPSALWLNHVFHDVFDLRIRLDAGTADHYYDHITAALQTPAFLPRALFERFNIEVIATTESPLDRLQHHAAIAASGWQGRVVTAYRPDPVVDPEHEQFAGALQQFGALTGEDVLSWDGYLRAHRQRRAFFAAHGATSTDHGHPSAATADLSPVQAQRLFDTVVRGEATPEQAELFRAQVLTEMAAMSLDDGLVMQLHPGCFRNHNRQLFEQYGRDKGADIPMRTDYVHALKPLLDRHGNDPRLRLIVFTLDETSYSRELAPLAGHYPSLLLGPAWWFHDAPEGMWRFREQTLASAGFYNTVGFNDDTRAFLSIPARHDVARRVDSAFLAKLVAEHRLEEDEATEVAIDLAYRLPKQAYNL.

The protein belongs to the metallo-dependent hydrolases superfamily. Uronate isomerase family.

The catalysed reaction is D-glucuronate = D-fructuronate. It catalyses the reaction aldehydo-D-galacturonate = keto-D-tagaturonate. Its pathway is carbohydrate metabolism; pentose and glucuronate interconversion. This Xanthomonas euvesicatoria pv. vesicatoria (strain 85-10) (Xanthomonas campestris pv. vesicatoria) protein is Uronate isomerase.